Consider the following 247-residue polypeptide: tRNA pseudouridine synthase A (247 aa).

The active-site Nucleophile is the Asp-52. Substrate is bound at residue Tyr-111.

It belongs to the tRNA pseudouridine synthase TruA family. In terms of assembly, homodimer.

The enzyme catalyses uridine(38/39/40) in tRNA = pseudouridine(38/39/40) in tRNA. Functionally, formation of pseudouridine at positions 38, 39 and 40 in the anticodon stem and loop of transfer RNAs. The sequence is that of tRNA pseudouridine synthase A from Erythrobacter litoralis (strain HTCC2594).